The primary structure comprises 245 residues: tRNA (guanine-N(1)-)-methyltransferase (245 aa).

Residues G111 and 131 to 136 (IGDYVL) contribute to the S-adenosyl-L-methionine site.

This sequence belongs to the RNA methyltransferase TrmD family. As to quaternary structure, homodimer.

It is found in the cytoplasm. The enzyme catalyses guanosine(37) in tRNA + S-adenosyl-L-methionine = N(1)-methylguanosine(37) in tRNA + S-adenosyl-L-homocysteine + H(+). In terms of biological role, specifically methylates guanosine-37 in various tRNAs. In Caldicellulosiruptor saccharolyticus (strain ATCC 43494 / DSM 8903 / Tp8T 6331), this protein is tRNA (guanine-N(1)-)-methyltransferase.